A 449-amino-acid polypeptide reads, in one-letter code: Glucose-6-phosphate isomerase (449 aa).

E291 serves as the catalytic Proton donor. Active-site residues include H312 and K426.

This sequence belongs to the GPI family.

It localises to the cytoplasm. It catalyses the reaction alpha-D-glucose 6-phosphate = beta-D-fructose 6-phosphate. The protein operates within carbohydrate biosynthesis; gluconeogenesis. It functions in the pathway carbohydrate degradation; glycolysis; D-glyceraldehyde 3-phosphate and glycerone phosphate from D-glucose: step 2/4. Functionally, catalyzes the reversible isomerization of glucose-6-phosphate to fructose-6-phosphate. The sequence is that of Glucose-6-phosphate isomerase from Streptococcus pneumoniae serotype 4 (strain ATCC BAA-334 / TIGR4).